We begin with the raw amino-acid sequence, 374 residues long: Anhydro-N-acetylmuramic acid kinase (374 aa).

15 to 22 (GTSADGID) is an ATP binding site.

It belongs to the anhydro-N-acetylmuramic acid kinase family.

The enzyme catalyses 1,6-anhydro-N-acetyl-beta-muramate + ATP + H2O = N-acetyl-D-muramate 6-phosphate + ADP + H(+). The protein operates within amino-sugar metabolism; 1,6-anhydro-N-acetylmuramate degradation. It participates in cell wall biogenesis; peptidoglycan recycling. In terms of biological role, catalyzes the specific phosphorylation of 1,6-anhydro-N-acetylmuramic acid (anhMurNAc) with the simultaneous cleavage of the 1,6-anhydro ring, generating MurNAc-6-P. Is required for the utilization of anhMurNAc either imported from the medium or derived from its own cell wall murein, and thus plays a role in cell wall recycling. This Xanthomonas axonopodis pv. citri (strain 306) protein is Anhydro-N-acetylmuramic acid kinase.